The primary structure comprises 250 residues: Triosephosphate isomerase (250 aa).

8–10 (NWK) serves as a coordination point for substrate. Residue His93 is the Electrophile of the active site. Glu165 serves as the catalytic Proton acceptor. Gly171 and Ser211 together coordinate substrate.

Belongs to the triosephosphate isomerase family. Homodimer.

It is found in the cytoplasm. It carries out the reaction D-glyceraldehyde 3-phosphate = dihydroxyacetone phosphate. It participates in carbohydrate biosynthesis; gluconeogenesis. Its pathway is carbohydrate degradation; glycolysis; D-glyceraldehyde 3-phosphate from glycerone phosphate: step 1/1. Functionally, involved in the gluconeogenesis. Catalyzes stereospecifically the conversion of dihydroxyacetone phosphate (DHAP) to D-glyceraldehyde-3-phosphate (G3P). This Malacoplasma penetrans (strain HF-2) (Mycoplasma penetrans) protein is Triosephosphate isomerase.